Here is a 367-residue protein sequence, read N- to C-terminus: Porin Omp2a (367 aa).

The signal sequence occupies residues 1 to 22 (MNIKSLLLGSAAALVAASGAQA).

It belongs to the alphaproteobacteria porin family. In terms of assembly, monomer.

It is found in the cell outer membrane. Functionally, forms passive diffusion pores that allow small molecular weight hydrophilic materials across the outer membrane. In Brucella melitensis biotype 1 (strain ATCC 23456 / CCUG 17765 / NCTC 10094 / 16M), this protein is Porin Omp2a (omp2a).